An 88-amino-acid chain; its full sequence is MKFLLLFLVVLPIMGVLGKKNGYAVDSSGKAPECLLSNYCYNECTKVHYADKGYCCLLSCYCFGLNDDKKVLEISDTRKSYCDTPIIN.

The signal sequence occupies residues 1–18 (MKFLLLFLVVLPIMGVLG). An LCN-type CS-alpha/beta domain is found at 20-83 (KNGYAVDSSG…ISDTRKSYCD (64 aa)). 4 disulfides stabilise this stretch: cysteine 34–cysteine 55, cysteine 40–cysteine 60, cysteine 44–cysteine 62, and cysteine 56–cysteine 82.

This sequence belongs to the long (4 C-C) scorpion toxin superfamily. Sodium channel inhibitor family. Beta subfamily. As to expression, expressed by the venom gland.

It localises to the secreted. In terms of biological role, excitatory insect beta-toxins induce a spastic paralysis. They bind voltage-independently at site-4 of sodium channels (Nav) and shift the voltage of activation toward more negative potentials thereby affecting sodium channel activation and promoting spontaneous and repetitive firing. This toxin is active only on insects. The protein is Beta-insect excitatory toxin 2 of Androctonus australis (Sahara scorpion).